We begin with the raw amino-acid sequence, 253 residues long: 5-oxoprolinase subunit A (253 aa).

It belongs to the LamB/PxpA family. In terms of assembly, forms a complex composed of PxpA, PxpB and PxpC.

The enzyme catalyses 5-oxo-L-proline + ATP + 2 H2O = L-glutamate + ADP + phosphate + H(+). Functionally, catalyzes the cleavage of 5-oxoproline to form L-glutamate coupled to the hydrolysis of ATP to ADP and inorganic phosphate. This Bacillus licheniformis (strain ATCC 14580 / DSM 13 / JCM 2505 / CCUG 7422 / NBRC 12200 / NCIMB 9375 / NCTC 10341 / NRRL NRS-1264 / Gibson 46) protein is 5-oxoprolinase subunit A.